The sequence spans 267 residues: Glutamate 5-kinase (267 aa).

Residue K17 participates in ATP binding. Positions 57, 144, and 156 each coordinate substrate. ATP-binding positions include 176-177 (SD) and 218-224 (TGGMATK).

Belongs to the glutamate 5-kinase family.

It localises to the cytoplasm. It catalyses the reaction L-glutamate + ATP = L-glutamyl 5-phosphate + ADP. It functions in the pathway amino-acid biosynthesis; L-proline biosynthesis; L-glutamate 5-semialdehyde from L-glutamate: step 1/2. In terms of biological role, catalyzes the transfer of a phosphate group to glutamate to form L-glutamate 5-phosphate. This Clostridium acetobutylicum (strain ATCC 824 / DSM 792 / JCM 1419 / IAM 19013 / LMG 5710 / NBRC 13948 / NRRL B-527 / VKM B-1787 / 2291 / W) protein is Glutamate 5-kinase.